The chain runs to 662 residues: Probable quinol oxidase subunit 1 (662 aa).

2 helical membrane passes run 14–34 (WMIT…IAVI) and 58–78 (IMYL…ALLI). Fe(II)-heme a is bound at residue His102. Transmembrane regions (helical) follow at residues 103-123 (GVIM…NIVV), 140-160 (VSFW…IIGG), 187-207 (IAIQ…FVTI), 228-248 (FITT…LALM), 273-293 (FFWV…FGIY), 311-331 (MVWA…HHFF), 336-356 (GALI…PTGV), and 376-396 (MLFS…GVML). His279, Tyr283, His328, and His329 together coordinate Cu cation. The 1'-histidyl-3'-tyrosine (His-Tyr) cross-link spans 279–283 (HPEVY). Residue His414 coordinates heme a3. The next 5 membrane-spanning stretches (helical) occupy residues 415–435 (FHYT…IFWY), 451–471 (CFWF…ILGL), 493–513 (ISTI…VSIV), 587–604 (PVGF…FFLI), and 608–627 (VIPA…YRSF). His416 serves as a coordination point for Fe(II)-heme a.

This sequence belongs to the heme-copper respiratory oxidase family. It depends on Cu cation as a cofactor. Requires ferriheme a as cofactor. Heme A3. is required as a cofactor.

The protein resides in the cell membrane. It carries out the reaction 2 a quinol + O2 = 2 a quinone + 2 H2O. It functions in the pathway energy metabolism; oxidative phosphorylation. Functionally, catalyzes quinol oxidation with the concomitant reduction of oxygen to water. This Staphylococcus aureus (strain MRSA252) protein is Probable quinol oxidase subunit 1 (qoxB).